The primary structure comprises 355 residues: N6-mAMP deaminase (355 aa).

Positions 13 and 15 each coordinate Zn(2+). Residues His15, Asn17, His65, 97 to 100 (TTPK), Asp160, and Gly190 each bind N(6)-methyl-AMP. His217 provides a ligand contact to Zn(2+). N(6)-methyl-AMP-binding residues include Glu220, Asp295, and Asp296. Glu220 (proton donor) is an active-site residue. Asp295 contacts Zn(2+).

This sequence belongs to the metallo-dependent hydrolases superfamily. Adenosine and AMP deaminases family. Monomer. Zn(2+) serves as cofactor.

It localises to the cytoplasm. Its subcellular location is the cytosol. It catalyses the reaction N(6)-methyl-AMP + H2O + H(+) = IMP + methylamine. Its function is as follows. Catalyzes the hydrolysis of the free cytosolic methylated adenosine nucleotide N(6)-methyl-AMP (N6-mAMP) to produce inositol monophosphate (IMP) and methylamine. Is required for the catabolism of cytosolic N6-mAMP, which is derived from the degradation of mRNA containing N6-methylated adenine (m6A). Does not possess deaminase activity toward adenosine, AMP, N6-methyladenosine, or N6-mATP in vitro. The sequence is that of N6-mAMP deaminase from Arabidopsis thaliana (Mouse-ear cress).